A 689-amino-acid polypeptide reads, in one-letter code: Acetyl-coenzyme A synthetase 2-like, mitochondrial (689 aa).

The transit peptide at 1–37 directs the protein to the mitochondrion; it reads MAARTLGRGVGRLLGSLRGLSGQPARPPCGVSAPRRA. The tract at residues 17–46 is disordered; it reads LRGLSGQPARPPCGVSAPRRAASGPSGSAP. Residues 32 to 46 are compositionally biased toward low complexity; it reads SAPRRAASGPSGSAP. CoA contacts are provided by residues 224-227 and Thr-341; that span reads RGGR. An N6-acetyllysine modification is found at Lys-396. ATP is bound by residues 417 to 419, 441 to 446, Asp-533, and Arg-548; these read GEP and DTWWQT. Residue Ser-556 participates in CoA binding. Arg-559 serves as a coordination point for ATP. Lys-642 bears the N6-acetyllysine mark.

The protein belongs to the ATP-dependent AMP-binding enzyme family. In terms of assembly, interacts with SIRT3. Post-translationally, reversibly acetylated on Lys-642. The acetyl-CoA synthase activity is inhibited by acetylation and activated by deacetylation mediated by the deacetylase SIRT3.

The protein resides in the mitochondrion matrix. The catalysed reaction is acetate + ATP + CoA = acetyl-CoA + AMP + diphosphate. The enzyme catalyses propanoate + ATP + CoA = propanoyl-CoA + AMP + diphosphate. With respect to regulation, inhibited by acetylation at Lys-642 and activated by deacetylation mediated by the deacetylase SIRT3. Its function is as follows. Catalyzes the synthesis of acetyl-CoA from short-chain fatty acids. Acetate is the preferred substrate. Can also utilize propionate with a much lower affinity. Provides acetyl-CoA that is utilized mainly for oxidation under ketogenic conditions. Involved in thermogenesis under ketogenic conditions, using acetate as a vital fuel when carbohydrate availability is insufficient. The polypeptide is Acetyl-coenzyme A synthetase 2-like, mitochondrial (ACSS1) (Homo sapiens (Human)).